Consider the following 88-residue polypeptide: Small ribosomal subunit protein bS16c (88 aa).

The protein belongs to the bacterial ribosomal protein bS16 family.

The protein localises to the plastid. It is found in the chloroplast. The sequence is that of Small ribosomal subunit protein bS16c from Helianthus annuus (Common sunflower).